We begin with the raw amino-acid sequence, 591 residues long: Homeobox domain-containing transcription factor HOB1 (591 aa).

A compositionally biased stretch (basic and acidic residues) spans 1–15 (MEGKNEDMHTPRGPE). Disordered stretches follow at residues 1 to 37 (MEGKNEDMHTPRGPEDASNIADEYPSPERQQQGDMLG) and 148 to 168 (IAGPSTLRRSPLPDTFSRSPA). Positions 176-223 (IAILRESYARNPNPDRKELERLAARTGRPWNKIREYFRQRRNKLRGLE) form a DNA-binding region, homeobox. 2 disordered regions span residues 420-463 (DAGL…PRES) and 543-563 (DAIERRNAGESKRKRDDALTE). Residues 427–441 (QGEEDQPPTVEESDQ) are compositionally biased toward acidic residues. Residues 543–560 (DAIERRNAGESKRKRDDA) are compositionally biased toward basic and acidic residues.

It is found in the nucleus. General stress-responsive transcription factor that governs multiple stress responses and adaptations. Plays a key role in virulence. Mediates the expression of LAC1, which is the major laccase involved in melanin synthesis. Positively regulates BZP4 induction under conditions of nutrient starvation and basal expression levels of MBS1 and USV101, 3 major transcription factors that independently contribute to melanin production. Also acts as a key regulator of ergosterol gene expression. This chain is Homeobox domain-containing transcription factor HOB1, found in Cryptococcus neoformans var. grubii serotype A (strain H99 / ATCC 208821 / CBS 10515 / FGSC 9487) (Filobasidiella neoformans var. grubii).